Here is a 39-residue protein sequence, read N- to C-terminus: Photosystem II reaction center protein X (39 aa).

Residues 10-30 (WSLVLGAAIVLIPATIGLIFI) traverse the membrane as a helical segment.

It belongs to the PsbX family. Type 1 subfamily. PSII is composed of 1 copy each of membrane proteins PsbA, PsbB, PsbC, PsbD, PsbE, PsbF, PsbH, PsbI, PsbJ, PsbK, PsbL, PsbM, PsbT, PsbX, PsbY, PsbZ, Psb30/Ycf12, peripheral proteins PsbO, CyanoQ (PsbQ), PsbU, PsbV and a large number of cofactors. It forms dimeric complexes.

It localises to the cellular thylakoid membrane. Functionally, involved in the binding and/or turnover of quinones at the Q(B) site of photosystem II (PSII). PSII is a light-driven water plastoquinone oxidoreductase, using light energy to abstract electrons from H(2)O, generating a proton gradient subsequently used for ATP formation. This Microcystis aeruginosa (strain NIES-843 / IAM M-2473) protein is Photosystem II reaction center protein X.